Here is a 454-residue protein sequence, read N- to C-terminus: Probable DNA primase large subunit (454 aa).

Residues Cys-280, Cys-359, Cys-375, and Cys-415 each contribute to the [4Fe-4S] cluster site.

This sequence belongs to the eukaryotic-type primase large subunit family. In terms of assembly, heterodimer of a small subunit and a large subunit. Requires [4Fe-4S] cluster as cofactor.

Its function is as follows. DNA primase is the polymerase that synthesizes small RNA primers for the Okazaki fragments made during discontinuous DNA replication. The chain is Probable DNA primase large subunit from Arabidopsis thaliana (Mouse-ear cress).